Consider the following 966-residue polypeptide: Collagen alpha-1(I) chain (966 aa).

Residues 1–966 (SYGYDEKSAG…PGPPGPPGPP (966 aa)) are disordered. Residue Lys7 is modified to Allysine. At Ser8 the chain carries Phosphoserine. A 4-hydroxyproline mark is found at Pro27, Pro30, Pro32, Pro41, Pro44, Pro47, Pro61, Pro76, Pro82, Pro91, and Pro97. Residues 64 to 78 (NGDDGEAGKPGRPGE) are compositionally biased toward basic and acidic residues. The residue at position 100 (Lys100) is a 5-hydroxylysine; alternate. Lys100 carries O-linked (Gal...) hydroxylysine; alternate glycosylation. Residue Ser106 is modified to Phosphoserine. Residues 114 to 130 (DAGPAGPKGEPGSPGEN) are compositionally biased toward low complexity. Pro124, Pro127, Pro133, Pro142, Pro148, Pro169, Pro178, Pro181, Pro208, Pro211, Pro223, Pro229, Pro238, Pro244, Pro247, and Pro262 each carry 4-hydroxyproline. Low complexity predominate over residues 148–166 (PGASGPAGARGNDGATGAA). Residues 168–180 (PPGPTGPAGPPGF) are compositionally biased toward pro residues. Residues 214-253 (AGAAGPAGNPGADGQPGAKGANGAPGIAGAPGFPGARGPS) show a composition bias toward low complexity. Lys265 carries the post-translational modification 5-hydroxylysine. 8 positions are modified to 4-hydroxyproline: Pro271, Pro274, Pro286, Pro295, Pro310, Pro316, Pro325, and Pro331. The segment covering 320-329 (GERGGPGSRG) has biased composition (gly residues). The residue at position 340 (Lys340) is a 5-hydroxylysine. 4-hydroxyproline occurs at positions 349, 358, 364, 370, 379, 382, 391, 400, 406, 418, 427, 436, 439, 457, 475, 481, 487, 493, 499, 505, 517, 526, 538, 542, 548, 554, and 563. Residues 373–399 (KGLTGSPGSPGPDGKTGPPGPAGQDGR) show a composition bias toward low complexity. A compositionally biased stretch (low complexity) spans 408–427 (ARGQAGVMGFPGPKGAAGEP). Residues 469 to 496 (QGPAGSPGFQGLPGPAGPPGEAGKPGEQ) show a composition bias toward low complexity. Lys575 bears the 5-hydroxylysine mark. 3 positions are modified to 4-hydroxyproline: Pro581, Pro596, and Pro602. The segment covering 608–622 (SGPSGPAGPTGARGA) has biased composition (low complexity). At Ser611 the chain carries Phosphoserine. Residues Pro623, Pro629, Pro632, Pro641, Pro647, Pro665, Pro674, and Pro683 each carry the 4-hydroxyproline modification. Residues 635–662 (AGFAGPPGADGQPGAKGEPGDAGAKGDA) show a composition bias toward low complexity. The segment covering 664-676 (PPGPAGPTGPPGP) has biased composition (pro residues). Lys686 is subject to 5-hydroxylysine. The span at 691-707 (SAGPPGATGFPGAAGRV) shows a compositional bias: low complexity. 4-hydroxyproline is present on residues Pro695 and Pro701. Pro709 bears the 3-hydroxyproline mark. Pro710, Pro719, Pro722, Pro746, Pro755, Pro773, Pro782, Pro785, Pro791, Pro806, Pro812, Pro818, Pro826, and Pro832 each carry 4-hydroxyproline. Residues 736 to 755 (ETGPAGEKGSPGADGPAGAP) are compositionally biased toward low complexity. Residues 805-815 (PPGPVGPPGLA) are compositionally biased toward pro residues. The span at 824–835 (EGPGAEGSPGRG) shows a compositional bias: gly residues. A compositionally biased stretch (low complexity) spans 852 to 866 (AGPAGARGPAGPQGP). The span at 867–881 (RGDKGETGEQGDRGI) shows a compositional bias: basic and acidic residues. Lys870 carries the 5-hydroxylysine modification. Residue Lys882 is modified to 5-hydroxylysine; alternate. A glycan (O-linked (Gal...) hydroxylysine; alternate) is linked at Lys882. 4 positions are modified to 4-hydroxyproline: Pro897, Pro900, Pro918, and Pro933. Over residues 900 to 933 (PGEQGPSGASGPAGPRGPPGSAGSPGKDGLNGLP) the composition is skewed to low complexity. Residue Pro938 is modified to 3-hydroxyproline. A 4-hydroxyproline modification is found at Pro939. Residues 951–966 (VGPPGPPGPPGPPGPP) show a composition bias toward pro residues. Pro953 bears the 3-hydroxyproline mark. Pro954 carries the 4-hydroxyproline modification. At Pro956 the chain carries 3-hydroxyproline. Pro957 bears the 4-hydroxyproline mark. At Pro959 the chain carries 3-hydroxyproline. 4-hydroxyproline is present on residues Pro960, Pro963, and Pro966.

Belongs to the fibrillar collagen family. Trimers of one alpha 2(I) and two alpha 1(I) chains. Post-translationally, contains mostly 4-hydroxyproline. Proline residues at the third position of the tripeptide repeating unit (G-X-Y) are hydroxylated in some or all of the chains. Contains 3-hydroxyproline at a few sites. This modification occurs on the first proline residue in the sequence motif Gly-Pro-Hyp, where Hyp is 4-hydroxyproline. In terms of processing, lysine residues at the third position of the tripeptide repeating unit (G-X-Y) are 5-hydroxylated in some or all of the chains. Post-translationally, O-glycosylated on hydroxylated lysine residues. The O-linked glycan consists of a Glc-Gal disaccharide. Expressed in bones.

Its subcellular location is the secreted. It localises to the extracellular space. It is found in the extracellular matrix. Functionally, type I collagen is a member of group I collagen (fibrillar forming collagen). This chain is Collagen alpha-1(I) chain, found in Bradypus variegatus (Brown-throated three-fingered sloth).